The primary structure comprises 207 residues: Superoxide dismutase [Mn] (207 aa).

Residues histidine 28, histidine 76, aspartate 160, and histidine 164 each contribute to the Mn(2+) site.

This sequence belongs to the iron/manganese superoxide dismutase family. The cofactor is Mn(2+).

The enzyme catalyses 2 superoxide + 2 H(+) = H2O2 + O2. Functionally, destroys superoxide anion radicals which are normally produced within the cells and which are toxic to biological systems. This chain is Superoxide dismutase [Mn] (sodA), found in Mycobacterium lepraemurium.